A 199-amino-acid polypeptide reads, in one-letter code: Puromycin N-acetyltransferase (199 aa).

An N-acetyltransferase domain is found at 6 to 198 (PTVRLATRDD…RTWCMTRKPG (193 aa)).

Functionally, detoxification of puromycin. In Streptomyces alboniger, this protein is Puromycin N-acetyltransferase (pac).